The following is a 513-amino-acid chain: ATP synthase subunit alpha (513 aa).

ATP is bound at residue 169–176 (GDRQTGKS).

The protein belongs to the ATPase alpha/beta chains family. In terms of assembly, F-type ATPases have 2 components, CF(1) - the catalytic core - and CF(0) - the membrane proton channel. CF(1) has five subunits: alpha(3), beta(3), gamma(1), delta(1), epsilon(1). CF(0) has three main subunits: a(1), b(2) and c(9-12). The alpha and beta chains form an alternating ring which encloses part of the gamma chain. CF(1) is attached to CF(0) by a central stalk formed by the gamma and epsilon chains, while a peripheral stalk is formed by the delta and b chains.

It localises to the cell inner membrane. The catalysed reaction is ATP + H2O + 4 H(+)(in) = ADP + phosphate + 5 H(+)(out). Produces ATP from ADP in the presence of a proton gradient across the membrane. The alpha chain is a regulatory subunit. This chain is ATP synthase subunit alpha, found in Sodalis glossinidius (strain morsitans).